A 454-amino-acid polypeptide reads, in one-letter code: MKKLSVVILAAGKGTRMYSDLPKVLHKIAGKPMVKHVIDTAKQLSADQIHLIYGHGADLLKSHLADEPVNWVFQAEQLGTGHAMQQAAPFFADDENILMLYGDSPLISKETLEKLIAAKPENGIALLTVNLDNPTGYGRIIREKGSVVAIVEQKDADAEQLKITEVNTGVMVSDGASFKKWLGRLNNNNAQGEYYMTDVIGLANQDGFQVAAVSATDKMEVEGANNRLQLAALERYYQHKQAERLLLEGVMLIDPARFDLRGTLEHGKDCEIDVNVIIEGSVKLGDRVKIGAGCVIKNCEIGDDVEIKPYSVFEDSTIGARASIGPFSRLRPGAELAEETHIGNFVEIKKATVGKGSKVNHLTYVGDAQVGTDCNLGAGVITCNYDGANKFKTVIGDNVFVGSDVQLVAPVNVANGATIGAGTTVTKDIGENELVISRVPQRHIAGWQRPTKKK.

A pyrophosphorylase region spans residues 1–227; the sequence is MKKLSVVILA…KMEVEGANNR (227 aa). Residues 9-12, Lys23, Gln74, 79-80, 101-103, Gly138, Glu152, Asn167, and Asn225 contribute to the UDP-N-acetyl-alpha-D-glucosamine site; these read LAAG, GT, and YGD. Asp103 provides a ligand contact to Mg(2+). Asn225 is a binding site for Mg(2+). The segment at 228–248 is linker; it reads LQLAALERYYQHKQAERLLLE. The N-acetyltransferase stretch occupies residues 249–454; it reads GVMLIDPARF…AGWQRPTKKK (206 aa). Residues Arg331 and Lys349 each contribute to the UDP-N-acetyl-alpha-D-glucosamine site. The Proton acceptor role is filled by His361. Positions 364 and 375 each coordinate UDP-N-acetyl-alpha-D-glucosamine. Acetyl-CoA contacts are provided by residues Ala378, 384-385, Ser403, Ala421, and Arg438; that span reads NY.

In the N-terminal section; belongs to the N-acetylglucosamine-1-phosphate uridyltransferase family. It in the C-terminal section; belongs to the transferase hexapeptide repeat family. Homotrimer. The cofactor is Mg(2+).

The protein resides in the cytoplasm. It catalyses the reaction alpha-D-glucosamine 1-phosphate + acetyl-CoA = N-acetyl-alpha-D-glucosamine 1-phosphate + CoA + H(+). The enzyme catalyses N-acetyl-alpha-D-glucosamine 1-phosphate + UTP + H(+) = UDP-N-acetyl-alpha-D-glucosamine + diphosphate. It participates in nucleotide-sugar biosynthesis; UDP-N-acetyl-alpha-D-glucosamine biosynthesis; N-acetyl-alpha-D-glucosamine 1-phosphate from alpha-D-glucosamine 6-phosphate (route II): step 2/2. Its pathway is nucleotide-sugar biosynthesis; UDP-N-acetyl-alpha-D-glucosamine biosynthesis; UDP-N-acetyl-alpha-D-glucosamine from N-acetyl-alpha-D-glucosamine 1-phosphate: step 1/1. The protein operates within bacterial outer membrane biogenesis; LPS lipid A biosynthesis. In terms of biological role, catalyzes the last two sequential reactions in the de novo biosynthetic pathway for UDP-N-acetylglucosamine (UDP-GlcNAc). The C-terminal domain catalyzes the transfer of acetyl group from acetyl coenzyme A to glucosamine-1-phosphate (GlcN-1-P) to produce N-acetylglucosamine-1-phosphate (GlcNAc-1-P), which is converted into UDP-GlcNAc by the transfer of uridine 5-monophosphate (from uridine 5-triphosphate), a reaction catalyzed by the N-terminal domain. The polypeptide is Bifunctional protein GlmU (Mannheimia succiniciproducens (strain KCTC 0769BP / MBEL55E)).